The chain runs to 1100 residues: Formin-like protein 1 (1100 aa).

Low complexity predominate over residues 1–13 (MGNAAGSAEQPAG). Disordered stretches follow at residues 1–31 (MGNAAGSAEQPAGPAAPPPKQPAPPKQPMPA), 167–200 (STDNGASNSEKNKPLEQSVEDLSKGPPSSVPKSR), 446–474 (RFSESTAMGPSRRPPEPEKAPPAAPTRPS), and 510–635 (TPSG…AKKP). The N-myristoyl glycine moiety is linked to residue Gly2. Ser7 is modified (phosphoserine). The segment covering 14–28 (PAAPPPKQPAPPKQP) has biased composition (pro residues). The 442-residue stretch at 27-468 (QPMPAAGELE…PPEPEKAPPA (442 aa)) folds into the GBD/FH3 domain. Phosphoserine is present on Ser184. Residues 517–538 (PTPGVPTGSPSPDLAPAAEPAP) are compositionally biased toward low complexity. Pro residues predominate over residues 539-615 (GAAPPPPPPL…PPPPPPPGGP (77 aa)). Phosphoserine occurs at positions 624 and 693. Residues 632–1023 (AKKPIQTKFR…QEAGADTPGK (392 aa)) enclose the FH2 domain. The interval 1008 to 1037 (KKEAAAQEAGADTPGKGEPPAPKSPPKARR) is disordered. Residues 1013–1023 (AQEAGADTPGK) show a composition bias toward low complexity. A Phosphoserine modification is found at Ser1031. Residues 1059 to 1090 (SDRDGAIEDIITVIKTVPFTARTGKRTSRLLC) form the DAD domain.

Belongs to the formin homology family. As to quaternary structure, interacts with RAC1, PFN1 and PFN2. Interacts (activated by RAC1) with SRGAP2 (via SH3 domain); regulates the actin filament severing activity of FMNL1. Post-translationally, myristoylation mediates membrane localization and blebbing. In terms of tissue distribution, expressed in heart, brain, placenta, lung, liver, skeletal muscle, kidney and pancreas.

The protein resides in the cytoplasm. Its subcellular location is the cell membrane. It localises to the cytoplasmic vesicle. It is found in the phagosome. The protein localises to the cell cortex. The protein resides in the cell projection. Its subcellular location is the bleb. In terms of biological role, may play a role in the control of cell motility and survival of macrophages. Plays a role in the regulation of cell morphology and cytoskeletal organization. Required in the cortical actin filament dynamics and cell shape. The chain is Formin-like protein 1 (FMNL1) from Homo sapiens (Human).